Reading from the N-terminus, the 327-residue chain is GTPase Obg (327 aa).

Residues 2–160 form the Obg domain; that stretch reads HTFKDSLNIT…LDLRLELVLI (159 aa). Residues 161-326 enclose the OBG-type G domain; the sequence is ADIGLVGLPN…LVNELFALSR (166 aa). GTP contacts are provided by residues 167-174, 192-196, 213-216, 280-283, and 307-309; these read GLPNAGKS, FTTKV, DVPG, NKLD, and SIY. Mg(2+) is bound by residues serine 174 and threonine 194.

The protein belongs to the TRAFAC class OBG-HflX-like GTPase superfamily. OBG GTPase family. In terms of assembly, monomer. It depends on Mg(2+) as a cofactor.

It is found in the cytoplasm. An essential GTPase which binds GTP, GDP and possibly (p)ppGpp with moderate affinity, with high nucleotide exchange rates and a fairly low GTP hydrolysis rate. Plays a role in control of the cell cycle, stress response, ribosome biogenesis and in those bacteria that undergo differentiation, in morphogenesis control. The chain is GTPase Obg from Borrelia turicatae (strain 91E135).